The chain runs to 201 residues: Cerebellin-4 (201 aa).

A signal peptide spans Met1–Ala27. Residues Asn29 and Asn88 are each glycosylated (N-linked (GlcNAc...) asparagine). The 136-residue stretch at Ala66–Leu201 folds into the C1q domain.

In terms of assembly, homohexamer; disulfide-linked homotrimers. The trimers are assembled via the globular C1q domains. The trimers associate via N-terminal cysteine residues to form disulfide-linked hexamers. May form oligomers with CBLN1, CBLN2 and CBLN3 prior to secretion. Strongly interacts with DCC in a NTN1-displaceable fashion. Weakly binds to NRXN1 and NRXN2 long and short isoforms produced by alternative promoter usage. Interaction with NRXN3 short isoform is hardly detectable; no interaction at all with NRXN3 long isoform. In terms of processing, sialoglycoprotein.

The protein localises to the secreted. The protein resides in the synapse. Acts as a synaptic organizer in specific subsets of neurons in the brain. Essential for the formation and maintenance of inhibitory GABAergic synapses. Promotes the development of dendrite-targeting inhibitory GABAergic synapses made by somatostatin-positive interneurons. May contribute to the function of ventral medial habenula region of the brain implicated in the regulation of anxiety-related behaviors. May play a role in CBLN3 export from the endoplasmic reticulum and secretion. The chain is Cerebellin-4 (CBLN4) from Homo sapiens (Human).